The primary structure comprises 471 residues: Alkaline phosphatase (471 aa).

Positions 1-21 (MKQSTIALALLPLLFTPVTKA) are cleaved as a signal peptide. D73 is a binding site for Mg(2+). D73 provides a ligand contact to Zn(2+). S124 (phosphoserine intermediate) is an active-site residue. Mg(2+)-binding residues include D175 and T177. Cystine bridges form between C190–C200 and C308–C358. E344 lines the Mg(2+) pocket. D349, H353, D391, H392, and H434 together coordinate Zn(2+).

This sequence belongs to the alkaline phosphatase family. As to quaternary structure, isozymes 1 and 3 are a dimer of identical chains, isozyme 2 is a dimer of heterogeneous chains, one of each of the subunits from isozymes 1 and 3. Mg(2+) serves as cofactor. Requires Zn(2+) as cofactor.

It is found in the periplasm. The enzyme catalyses a phosphate monoester + H2O = an alcohol + phosphate. This Escherichia coli (strain K12) protein is Alkaline phosphatase (phoA).